The chain runs to 428 residues: Serine hydroxymethyltransferase (428 aa).

Residues Leu-117 and 121–123 (GHL) each bind (6S)-5,6,7,8-tetrahydrofolate. Lys-226 carries the post-translational modification N6-(pyridoxal phosphate)lysine.

It belongs to the SHMT family. Homodimer. Pyridoxal 5'-phosphate serves as cofactor.

It is found in the cytoplasm. It catalyses the reaction (6R)-5,10-methylene-5,6,7,8-tetrahydrofolate + glycine + H2O = (6S)-5,6,7,8-tetrahydrofolate + L-serine. It functions in the pathway one-carbon metabolism; tetrahydrofolate interconversion. It participates in amino-acid biosynthesis; glycine biosynthesis; glycine from L-serine: step 1/1. In terms of biological role, catalyzes the reversible interconversion of serine and glycine with tetrahydrofolate (THF) serving as the one-carbon carrier. This reaction serves as the major source of one-carbon groups required for the biosynthesis of purines, thymidylate, methionine, and other important biomolecules. Also exhibits THF-independent aldolase activity toward beta-hydroxyamino acids, producing glycine and aldehydes, via a retro-aldol mechanism. In Aquifex aeolicus (strain VF5), this protein is Serine hydroxymethyltransferase.